The chain runs to 345 residues: Nuclear distribution protein nudE-like 1 (345 aa).

A coiled-coil region spans residues 28–190; the sequence is QSFQEARDEL…LAVRERQQEV (163 aa). Residues 56–166 are self-association; it reads VQAEQRNRDL…LDEKESLLVS (111 aa). An interaction with KATNB1 region spans residues 64–189; the sequence is DLQADNQRLK…ELAVRERQQE (126 aa). A required for interaction with PAFAH1B1 region spans residues 114-133; that stretch reads YVRELEQANDDLERAKRATI. Residues 175–345 are interaction with CENPF; it reads RDLRQELAVR…SAPGMLPLSV (171 aa). Residues 189–256 form an interaction with YWHAE region; the sequence is EVTRKSAPSS…SARISALNIV (68 aa). An interaction with NEFL region spans residues 191 to 345; that stretch reads TRKSAPSSPT…SAPGMLPLSV (155 aa). The segment at 195 to 256 is interaction with KATNA1; that stretch reads APSSPTLDCE…SARISALNIV (62 aa). Ser215 bears the Phosphoserine mark. A Phosphothreonine; by CDK1 and MAPK1 modification is found at Thr219. The residue at position 231 (Ser231) is a Phosphoserine. Positions 241–280 are interaction with DISC1; it reads TSPLTPSARISALNIVGDLLRKVGALESKLAACRNFAKDQ. Residue Ser242 is modified to Phosphoserine; by CDK1. Thr245 carries the phosphothreonine; by CDK1 and MAPK1 modification. Residues 256–291 are required for localization to the centrosome and interaction with dynein, dynactin, tubulin gamma, PCM1 and PCNT; it reads VGDLLRKVGALESKLAACRNFAKDQASRKSYISGNV. Cys273 is lipidated: S-palmitoyl cysteine; by ZDHHC2, ZDHHC3 and ZDHHC7. Positions 315–345 are disordered; the sequence is GAVNGFDPAPPPPGLGSSRPSSAPGMLPLSV. Positions 329-339 are enriched in low complexity; it reads LGSSRPSSAPG. Position 344 is a phosphoserine (Ser344).

The protein belongs to the nudE family. As to quaternary structure, interacts with PLEKHM1 (via N- and C-terminus). Interacts with YWHAE. Interacts directly with NEFL and indirectly with NEFH. Interacts with microtubules. Self-associates. Interacts with DISC1, dynein, dynactin, tubulin gamma, KATNA1, KATNB1, PAFAH1B1, PCM1 and PCNT. Interacts (via C-terminus) with CENPF. Interacts with ZNF365. Interacts with GTP-bound RAB9A; the interaction may lead to RAB9A-dynein motor tethering. Post-translationally, phosphorylated in mitosis. Can be phosphorylated by CDK1, CDK5 and MAPK1. Phosphorylation by CDK5 promotes interaction with KATNA1 and YWHAE. In terms of processing, palmitoylation at Cys-273 reduces affinity for dynein. In terms of tissue distribution, expressed in brain, heart, kidney, liver, lung, pancreas, placenta and skeletal muscle.

It is found in the cytoplasm. Its subcellular location is the cytoskeleton. It localises to the microtubule organizing center. The protein localises to the centrosome. The protein resides in the chromosome. It is found in the centromere. Its subcellular location is the kinetochore. It localises to the spindle. Required for organization of the cellular microtubule array and microtubule anchoring at the centrosome. May regulate microtubule organization at least in part by targeting the microtubule severing protein KATNA1 to the centrosome. Also positively regulates the activity of the minus-end directed microtubule motor protein dynein. May enhance dynein-mediated microtubule sliding by targeting dynein to the microtubule plus ends. Required for several dynein- and microtubule-dependent processes such as the maintenance of Golgi integrity, the centripetal motion of secretory vesicles and the coupling of the nucleus and centrosome. Also required during brain development for the migration of newly formed neurons from the ventricular/subventricular zone toward the cortical plate. Plays a role, together with DISC1, in the regulation of neurite outgrowth. Required for mitosis in some cell types but appears to be dispensible for mitosis in cortical neuronal progenitors, which instead requires NDE1. Facilitates the polymerization of neurofilaments from the individual subunits NEFH and NEFL. Positively regulates lysosome peripheral distribution and ruffled border formation in osteoclasts. Plays a role, together with DISC1, in the regulation of neurite outgrowth. May act as a RAB9A/B effector that tethers RAB9-associated late endosomes to the dynein motor for their retrograde transport to the trans-Golgi network. This chain is Nuclear distribution protein nudE-like 1 (NDEL1), found in Homo sapiens (Human).